A 336-amino-acid polypeptide reads, in one-letter code: tRNA N6-adenosine threonylcarbamoyltransferase (336 aa).

2 residues coordinate Fe cation: His-111 and His-115. Residues 134–138 (LVSGG), Asp-167, Gly-180, and Asn-270 contribute to the substrate site. Fe cation is bound at residue Asp-298.

This sequence belongs to the KAE1 / TsaD family. The cofactor is Fe(2+).

Its subcellular location is the cytoplasm. The catalysed reaction is L-threonylcarbamoyladenylate + adenosine(37) in tRNA = N(6)-L-threonylcarbamoyladenosine(37) in tRNA + AMP + H(+). In terms of biological role, required for the formation of a threonylcarbamoyl group on adenosine at position 37 (t(6)A37) in tRNAs that read codons beginning with adenine. Is involved in the transfer of the threonylcarbamoyl moiety of threonylcarbamoyl-AMP (TC-AMP) to the N6 group of A37, together with TsaE and TsaB. TsaD likely plays a direct catalytic role in this reaction. The polypeptide is tRNA N6-adenosine threonylcarbamoyltransferase (Acinetobacter baumannii (strain AB307-0294)).